Consider the following 828-residue polypeptide: DNA gyrase subunit A (828 aa).

Residues 32 to 497 form the Topo IIA-type catalytic domain; sequence LPDVRDGLKP…EVLSLEDEDL (466 aa). Tyr120 acts as the O-(5'-phospho-DNA)-tyrosine intermediate in catalysis. The GyrA-box motif lies at 524 to 530; it reads QKRGGRG.

The protein belongs to the type II topoisomerase GyrA/ParC subunit family. In terms of assembly, heterotetramer, composed of two GyrA and two GyrB chains. In the heterotetramer, GyrA contains the active site tyrosine that forms a transient covalent intermediate with DNA, while GyrB binds cofactors and catalyzes ATP hydrolysis.

The protein resides in the cytoplasm. It carries out the reaction ATP-dependent breakage, passage and rejoining of double-stranded DNA.. A type II topoisomerase that negatively supercoils closed circular double-stranded (ds) DNA in an ATP-dependent manner to modulate DNA topology and maintain chromosomes in an underwound state. Negative supercoiling favors strand separation, and DNA replication, transcription, recombination and repair, all of which involve strand separation. Also able to catalyze the interconversion of other topological isomers of dsDNA rings, including catenanes and knotted rings. Type II topoisomerases break and join 2 DNA strands simultaneously in an ATP-dependent manner. This is DNA gyrase subunit A from Streptococcus pyogenes serotype M3 (strain ATCC BAA-595 / MGAS315).